A 66-amino-acid chain; its full sequence is Beta-toxin Cb2 (66 aa).

An LCN-type CS-alpha/beta domain is found at 1-66 (KEGYLVDLHT…VWPLPNKRCK (66 aa)). 4 disulfide bridges follow: Cys12-Cys65, Cys16-Cys41, Cys25-Cys46, and Cys29-Cys48.

Belongs to the long (4 C-C) scorpion toxin superfamily. Sodium channel inhibitor family. Beta subfamily. In terms of tissue distribution, expressed by the venom gland.

Its subcellular location is the secreted. Beta toxins bind voltage-independently at site-4 of sodium channels (Nav) and reduces peak current and shifts the voltage of activation toward more negative potentials thereby affecting sodium channel activation and promoting spontaneous and repetitive firing. Has an inhibitory effect on voltage-gated sodium channel hNav1.6/SCN8A, affecting both the activation and inactivation processes. Also reduces the peak current of hNav1.5/SCN5A but does not shift its voltage of activation. This toxin is active against mammals and lethal to mice. The sequence is that of Beta-toxin Cb2 from Centruroides baergi (Scorpion).